The following is a 466-amino-acid chain: Methylenetetrahydrofolate--tRNA-(uracil-5-)-methyltransferase TrmFO (466 aa).

10-15 contributes to the FAD binding site; that stretch reads GGGLAG.

Belongs to the MnmG family. TrmFO subfamily. It depends on FAD as a cofactor.

It localises to the cytoplasm. It catalyses the reaction uridine(54) in tRNA + (6R)-5,10-methylene-5,6,7,8-tetrahydrofolate + NADH + H(+) = 5-methyluridine(54) in tRNA + (6S)-5,6,7,8-tetrahydrofolate + NAD(+). It carries out the reaction uridine(54) in tRNA + (6R)-5,10-methylene-5,6,7,8-tetrahydrofolate + NADPH + H(+) = 5-methyluridine(54) in tRNA + (6S)-5,6,7,8-tetrahydrofolate + NADP(+). Catalyzes the folate-dependent formation of 5-methyl-uridine at position 54 (M-5-U54) in all tRNAs. The polypeptide is Methylenetetrahydrofolate--tRNA-(uracil-5-)-methyltransferase TrmFO (Phenylobacterium zucineum (strain HLK1)).